Here is a 172-residue protein sequence, read N- to C-terminus: Bifunctional protein PyrR (172 aa).

The PRPP-binding signature appears at 90–102; it reads LVLVDDVLMSGRT.

It belongs to the purine/pyrimidine phosphoribosyltransferase family. PyrR subfamily.

It carries out the reaction UMP + diphosphate = 5-phospho-alpha-D-ribose 1-diphosphate + uracil. In terms of biological role, regulates the transcription of the pyrimidine nucleotide (pyr) operon in response to exogenous pyrimidines. Its function is as follows. Also displays a weak uracil phosphoribosyltransferase activity which is not physiologically significant. The protein is Bifunctional protein PyrR of Pseudomonas entomophila (strain L48).